Here is a 150-residue protein sequence, read N- to C-terminus: Deoxyuridine 5'-triphosphate nucleotidohydrolase (150 aa).

Residues 69 to 71 (RSG), Asn-82, 86 to 88 (LID), and Lys-96 contribute to the substrate site.

This sequence belongs to the dUTPase family. The cofactor is Mg(2+).

It catalyses the reaction dUTP + H2O = dUMP + diphosphate + H(+). It functions in the pathway pyrimidine metabolism; dUMP biosynthesis; dUMP from dCTP (dUTP route): step 2/2. Its function is as follows. This enzyme is involved in nucleotide metabolism: it produces dUMP, the immediate precursor of thymidine nucleotides and it decreases the intracellular concentration of dUTP so that uracil cannot be incorporated into DNA. This is Deoxyuridine 5'-triphosphate nucleotidohydrolase from Neisseria gonorrhoeae (strain NCCP11945).